The chain runs to 144 residues: MTGEYKNTLDEKGRIMFPAKIRAELPDSNLVITRGVGNCLWIFTADKWKKFSDEIMKKTSLFKAQSLLVMRRLIAPAQEIEVDKNGRISIPQSLRECAGLEKDCIILGLGKCFELWDLKQYEKYLKESEPDFSEAAEALGEIGF.

2 consecutive SpoVT-AbrB domains span residues 4 to 47 (EYKN…TADK) and 77 to 120 (AQEI…DLKQ).

It belongs to the MraZ family. As to quaternary structure, forms oligomers.

It localises to the cytoplasm. The protein resides in the nucleoid. The chain is Transcriptional regulator MraZ from Treponema denticola (strain ATCC 35405 / DSM 14222 / CIP 103919 / JCM 8153 / KCTC 15104).